Here is a 233-residue protein sequence, read N- to C-terminus: Large ribosomal subunit protein eL6x (233 aa).

The span at 48 to 72 shows a compositional bias: basic and acidic residues; that stretch reads HDAKSKVDAPVEKPPKFYPAEDVKK. Residues 48–80 are disordered; it reads HDAKSKVDAPVEKPPKFYPAEDVKKPLPNRRTA.

Belongs to the eukaryotic ribosomal protein eL6 family.

In Arabidopsis thaliana (Mouse-ear cress), this protein is Large ribosomal subunit protein eL6x (RPL6C).